The sequence spans 495 residues: Alpha-1B-glycoprotein (495 aa).

Positions methionine 1–alanine 21 are cleaved as a signal peptide. 5 consecutive Ig-like V-type domains span residues alanine 22–proline 113, lysine 114–alanine 206, proline 207–leucine 299, isoleucine 300–aspartate 397, and glycine 398–serine 495. N-linked (GlcNAc...) (complex) asparagine glycosylation occurs at asparagine 44. 5 cysteine pairs are disulfide-bonded: cysteine 49/cysteine 93, cysteine 139/cysteine 182, cysteine 232/cysteine 279, cysteine 325/cysteine 374, and cysteine 423/cysteine 470. Residue asparagine 179 is glycosylated (N-linked (GlcNAc...) asparagine). 2 N-linked (GlcNAc...) asparagine glycosylation sites follow: asparagine 363 and asparagine 371.

In terms of assembly, interacts with CRISP3. In terms of tissue distribution, plasma.

The protein localises to the secreted. The polypeptide is Alpha-1B-glycoprotein (A1BG) (Homo sapiens (Human)).